Here is a 356-residue protein sequence, read N- to C-terminus: Metacaspase-1 (356 aa).

Positions 1-47 (MYSGRSGAPPPAHSPYPNSYNHGPPGHSAGHNVPPPPPTQPVQFGHG) are disordered. Residues histidine 147 and cysteine 203 contribute to the active site.

The protein belongs to the peptidase C14B family.

In terms of biological role, involved in cell death (apoptosis). The polypeptide is Metacaspase-1 (MCA1) (Ajellomyces capsulatus (strain NAm1 / WU24) (Darling's disease fungus)).